The sequence spans 88 residues: ATP synthase subunit 9, mitochondrial (88 aa).

The next 2 membrane-spanning stretches (helical) occupy residues 8–28 and 45–72; these read IGAGAATIASAGAAIGIGNVF and LFGYAILGFALSELIALFALMMAFLILF.

The protein belongs to the ATPase C chain family. As to quaternary structure, F-type ATPases have 2 components, CF(1) - the catalytic core - and CF(0) - the membrane proton channel. CF(1) has five subunits: alpha(3), beta(3), gamma(1), delta(1), epsilon(1). CF(0) has three main subunits: a, b and c.

It localises to the mitochondrion membrane. The enzyme catalyses ATP + H2O + 4 H(+)(in) = ADP + phosphate + 5 H(+)(out). Its function is as follows. This protein is one of the chains of the nonenzymatic membrane component (F0) of mitochondrial ATPase. This Beta vulgaris (Sugar beet) protein is ATP synthase subunit 9, mitochondrial (ATP9).